A 448-amino-acid chain; its full sequence is MNKTNEITLSPHWEDRISNEQKLRRNDQRSVFQRDRARILHSAAFRRLQAKTQVHGPGSANDFYRTRLTHSLEVSQIGTGVVAQLKLRQPEFRALLTSTSLMESICLAHDIGHPPFGHGGEIALNYMMRDHGGFEGNGQTLRILSKLEPYTEHFGMNLARRTLLGVLKYPAFLDQVHSTERPQEVTNVRHLKSIDWHPPKGVYRDDADILNWILKPLSDVDKALFSTFRFQQDSQNTHRKTRFKSIDCSIMELADDIAYGVHDLEDAIVMGIVTRNQWQESVASKLAECGDEWFEANIETISDKLFSGLQYQRKDGIGSIVNALLTSITIKPTTFNDEAEFESELLRWNAFLSPSMSYALEVLKKFVGQFVIHNSEMQRIEYKGQQIVMEIFDALNSDPERLLPENDKREWREAKESGANAHRVIADYIAGMTDGYAQRLYNQLFVPI.

The region spanning 67-260 is the HD domain; the sequence is RLTHSLEVSQ…MELADDIAYG (194 aa).

The protein belongs to the dGTPase family. Type 2 subfamily.

The polypeptide is Deoxyguanosinetriphosphate triphosphohydrolase-like protein (Aliivibrio fischeri (strain ATCC 700601 / ES114) (Vibrio fischeri)).